The primary structure comprises 358 residues: Peptide chain release factor 1 (358 aa).

N5-methylglutamine is present on Gln-233.

It belongs to the prokaryotic/mitochondrial release factor family. Methylated by PrmC. Methylation increases the termination efficiency of RF1.

The protein localises to the cytoplasm. Its function is as follows. Peptide chain release factor 1 directs the termination of translation in response to the peptide chain termination codons UAG and UAA. The chain is Peptide chain release factor 1 from Beijerinckia indica subsp. indica (strain ATCC 9039 / DSM 1715 / NCIMB 8712).